The sequence spans 610 residues: Elongation factor 4 (610 aa).

The region spanning 11–193 (EKIRNFSIIA…QIVEKVPAPT (183 aa)) is the tr-type G domain. Residues 23-28 (DHGKST) and 140-143 (NKID) contribute to the GTP site.

It belongs to the TRAFAC class translation factor GTPase superfamily. Classic translation factor GTPase family. LepA subfamily.

The protein resides in the cell membrane. It carries out the reaction GTP + H2O = GDP + phosphate + H(+). Its function is as follows. Required for accurate and efficient protein synthesis under certain stress conditions. May act as a fidelity factor of the translation reaction, by catalyzing a one-codon backward translocation of tRNAs on improperly translocated ribosomes. Back-translocation proceeds from a post-translocation (POST) complex to a pre-translocation (PRE) complex, thus giving elongation factor G a second chance to translocate the tRNAs correctly. Binds to ribosomes in a GTP-dependent manner. The sequence is that of Elongation factor 4 from Streptococcus pyogenes serotype M2 (strain MGAS10270).